A 207-amino-acid polypeptide reads, in one-letter code: Small ribosomal subunit protein uS5 (207 aa).

Residues Met-1–Trp-51 are disordered. Residues Glu-24 to Trp-51 show a composition bias toward basic and acidic residues. The S5 DRBM domain occupies Trp-51–Val-114.

This sequence belongs to the universal ribosomal protein uS5 family. As to quaternary structure, part of the 30S ribosomal subunit. Contacts proteins S4 and S8.

In terms of biological role, with S4 and S12 plays an important role in translational accuracy. Its function is as follows. Located at the back of the 30S subunit body where it stabilizes the conformation of the head with respect to the body. The polypeptide is Small ribosomal subunit protein uS5 (Prochlorococcus marinus (strain MIT 9312)).